The chain runs to 328 residues: 2-oxoglutarate-dependent dioxygenase gloE (328 aa).

Residues 170-271 (TRTNLTFLKY…RYTLAYFLRP (102 aa)) enclose the Fe2OG dioxygenase domain. Fe cation contacts are provided by His-194, Asp-196, and His-249. Residue Arg-262 coordinates 2-oxoglutarate.

The protein belongs to the iron/ascorbate-dependent oxidoreductase family. Fe(2+) is required as a cofactor.

Its pathway is mycotoxin biosynthesis. Its function is as follows. 2-oxoglutarate-dependent dioxygenase; part of the gene cluster that mediates the biosynthesis of pneumocandins, lipohexapeptides of the echinocandin family that prevent fungal cell wall formation by non-competitive inhibition of beta-1,3-glucan synthase. The 10,12-dimethylmyristoyl side chain is synthesized by the reducing polyketide synthase gloL/GLPKS4. The thioesterase gloN/GLHYD exclusively interacts with gloL/GLPKS4 to maintain turnover of the polyketide side chain. The 10R,12S-dimethylmyristic acid is then transferred to the first thiolation domain of the nonribosomal peptide synthetase gloA/GLNRPS4 by the acyl-AMP ligase gloD/GLligase, followed by its acylation to L-ornithine to trigger elongation of the cyclic hexapeptide. L-ornithine, 4R-hydroxyl-L-proline (generated from L-proline by the dioxygenase gloF/GLOXY2), 3S-hydroxyl-L-homotyrosine (generated by gloG/GLHtyB, gloH/GLHtyA, gloI/GLHtyC, gloJ/GLHtyD and hydroxylated at C-3 by the dioxygenase gloM/GLOXY1), 3R-hydroxyl-L-glutamine (generated from L-glutamine probably by the dioxygenase gloE/GLOXY3) and 3S-hydroxyl-L-proline (generated from L-proline by the dioxygenase gloF/GLOXY2 to yield pneumocandin B0), or 3S-hydroxyl-4S-methyl-L-proline (generated from L-leucine by the dioxygenase gloC/GLOXY4 to yield pneumocandin A0) are sequentially added to the growing chain. The last C domain of gloA/GLNRPS4 is proposed to be responsible for cyclization by condensation to form the peptide bond between L-ornithine and 3S-hydroxyl-4S-methyl-L-proline (for pneumocandin A0) or 3S-hydroxyl-L-proline (for pneumocandin B0). Finally, the subsequent C-4 hydroxylation of 3S-hydroxyl-L-homotyrosine and L-ornithine dihydroxylation at C-4 and C-5 are performed by the cytochrome P450 monooxygenases gloP/GLP450-1 and gloO/GLP450-2, respectively. The protein is 2-oxoglutarate-dependent dioxygenase gloE of Glarea lozoyensis (strain ATCC 20868 / MF5171).